A 140-amino-acid polypeptide reads, in one-letter code: Small ribosomal subunit protein uS19 (140 aa).

The protein belongs to the universal ribosomal protein uS19 family.

Functionally, protein S19 forms a complex with S13 that binds strongly to the 16S ribosomal RNA. In Sulfurisphaera tokodaii (strain DSM 16993 / JCM 10545 / NBRC 100140 / 7) (Sulfolobus tokodaii), this protein is Small ribosomal subunit protein uS19 (rps19).